Consider the following 394-residue polypeptide: MGMKHSSRCLLLRRKMAENAVESTEVSSAPPQPPQPVIPAKPVQCVHHVSTQPSCPGRGKMSKLLNPEEMTSRDYYFDSYAHFGIHEEMLKDEVRTLTYRNSMYHNKHVFKDKVVLDVGSGTGILSMFAAKAGAKKVFGIECSSISDYSEKIIKANHLDNVITIFKGKVEEVELPVEKVDIIISEWMGYCLFYESMLNTVIFARDKWLKPGGLMFPDRAALYVVAIEDRQYKDFKIHWWENVYGFDMTCIRDVAMKEPLVDIVDPKQVVTNACLIKEVDIYTVKTEELSFTSAFCLQIQRNDYVHALVTYFNIEFTKCHKKMGFSTAPDAPYTHWKQTVFYLEDYLTVRRGEEIYGTISMKPNAKNVRDLDFTVDLDFKGQLCETSVSNDYKMR.

The N-myristoyl glycine moiety is linked to residue glycine 2. A disordered region spans residues 21–40; it reads VESTEVSSAPPQPPQPVIPA. 2 short sequence motifs (SH3-binding) span residues 29 to 42 and 53 to 58; these read APPQPPQPVIPAKP and PSCPGR. Residues 30 to 39 are compositionally biased toward pro residues; that stretch reads PPQPPQPVIP. The residue at position 58 (arginine 58) is an Omega-N-methylarginine; by PRMT8. An Asymmetric dimethylarginine; by PRMT8 modification is found at arginine 73. Residues 73–394 enclose the SAM-dependent MTase PRMT-type domain; it reads RDYYFDSYAH…TSVSNDYKMR (322 aa). S-adenosyl-L-methionine-binding positions include histidine 86, arginine 95, glycine 119, 119-122, glutamate 141, and glutamate 170; that span reads GSGT. Catalysis depends on residues glutamate 185 and glutamate 194.

Belongs to the class I-like SAM-binding methyltransferase superfamily. Protein arginine N-methyltransferase family. PRMT8 subfamily. Homodimer. Tetramer; individual homodimers associates to form a homotetramer. Homooctamer; individual homodimers associates to form a homooctamer and homooligomerization is required for proper localization to the cell membrane. Heterodimer with PRMT1; heterodimerization may recruit PRMT1 activity to the plasma membrane. Interacts with PRMT2 (via the SH3 domain). Interacts with FYN (via the SH3 domain). Interacts with EWS; independently of EWS methylation status. In terms of tissue distribution, brain-specific. Only expressed in neurons, especially in the somatosensory and limbic systems, and a part of motor system. Highly expressed in all of the regions related to general somatosensory system. Expressed in most of the relay nuclei intervening the special somatosensory system, such as the auditory, visual and vestibular systems. Also present in forebrain limbic areas and thalamic nuclei relevant to limbic areas and in areas related to the motor system, such as the caudate putamen, Purkinje cells, inferior olivary nucleus and cerebellar nuclei.

The protein resides in the cell membrane. The catalysed reaction is L-arginyl-[protein] + S-adenosyl-L-methionine = N(omega)-methyl-L-arginyl-[protein] + S-adenosyl-L-homocysteine + H(+). The enzyme catalyses L-arginyl-[protein] + 2 S-adenosyl-L-methionine = N(omega),N(omega)-dimethyl-L-arginyl-[protein] + 2 S-adenosyl-L-homocysteine + 2 H(+). Functionally, S-adenosyl-L-methionine-dependent and membrane-associated arginine methyltransferase that can both catalyze the formation of omega-N monomethylarginine (MMA) and asymmetrical dimethylarginine (aDMA) in proteins such as NIFK, myelin basic protein, histone H4, H2A and H2A/H2B dimer. Able to mono- and dimethylate EWS protein; however its precise role toward EWS remains unclear as it still interacts with fully methylated EWS. This chain is Protein arginine N-methyltransferase 8, found in Mus musculus (Mouse).